The chain runs to 643 residues: Capsid scaffolding protein (643 aa).

Positions 1-15 (MSSPSPSSSSSDHPS) are enriched in low complexity. The tract at residues 1 to 31 (MSSPSPSSSSSDHPSSPAPVPAPPGPVPEAA) is disordered. A compositionally biased stretch (pro residues) spans 16–27 (SPAPVPAPPGPV). Residues H82, S151, and H173 each act as charge relay system in the active site. Residues 283–306 (SARGGEDPPTAAIATTPHPATDAT) form a disordered region. Over residues 290-306 (PPTAAIATTPHPATDAT) the composition is skewed to low complexity. The segment at 324–343 (EDLISVPRSTFMTMLQTNLD) is interaction with pAP. Positions 439–445 (RPGKRKR) match the Nuclear localization signal motif. Disordered regions lie at residues 485 to 519 (QQFP…QAFY) and 544 to 625 (CAPG…STKP). Pro residues predominate over residues 489-515 (QPLPQPQLQPQAQPQPQPAPQLYPAPP). The span at 607 to 616 (PQQQQQPQQQ) shows a compositional bias: low complexity. Positions 623–643 (TKPSQISQLQKIFCEELLNKT) are interaction with major capsid protein.

This sequence belongs to the herpesviridae capsid scaffolding protein family. Homomultimer. Interacts with major capsid protein. In terms of assembly, exists in a monomer-dimer equilibrium with the dimer being the active species. In terms of processing, capsid scaffolding protein is cleaved by assemblin after formation of the spherical procapsid. As a result, the capsid obtains its mature, icosahedral shape. Cleavages occur at two or more sites: release (R-site) and maturation (M-site).

Its subcellular location is the host cytoplasm. The protein localises to the host nucleus. The catalysed reaction is Cleaves -Ala-|-Ser- and -Ala-|-Ala- bonds in the scaffold protein.. In terms of biological role, acts as a scaffold protein by binding major capsid protein in the cytoplasm, inducing the nuclear localization of both proteins. Multimerizes in the nucleus such as major capsid protein forms the icosahedral T=16 capsid. Autocatalytic cleavage releases the assembly protein, and subsequently abolishes interaction with major capsid protein. Cleavages products are evicted from the capsid before or during DNA packaging. Its function is as follows. Protease that plays an essential role in virion assembly within the nucleus. Catalyzes the cleavage of the assembly protein after formation of the spherical procapsid. By that cleavage, the capsid matures and gains its icosahedral shape. The cleavage sites seem to include -Ala-Ser-, -Ala-Ala-, as well as Ala-Thr bonds. Assemblin and cleavages products are evicted from the capsid before or during DNA packaging. Plays a major role in capsid assembly. Acts as a scaffold protein by binding major capsid protein. Multimerizes in the nucleus such as major capsid protein forms the icosahedral T=16 capsid. Cleaved by assemblin after capsid completion. The cleavages products are evicted from the capsid before or during DNA packaging. The protein is Capsid scaffolding protein of Equine herpesvirus 2 (strain 86/87) (EHV-2).